The following is a 356-amino-acid chain: Uroporphyrinogen decarboxylase (356 aa).

Substrate-binding positions include 27–31, Asp77, Tyr154, Thr209, and His327; that span reads RQAGR.

Belongs to the uroporphyrinogen decarboxylase family. As to quaternary structure, homodimer.

The protein localises to the cytoplasm. The catalysed reaction is uroporphyrinogen III + 4 H(+) = coproporphyrinogen III + 4 CO2. It participates in porphyrin-containing compound metabolism; protoporphyrin-IX biosynthesis; coproporphyrinogen-III from 5-aminolevulinate: step 4/4. Catalyzes the decarboxylation of four acetate groups of uroporphyrinogen-III to yield coproporphyrinogen-III. The sequence is that of Uroporphyrinogen decarboxylase from Hamiltonella defensa subsp. Acyrthosiphon pisum (strain 5AT).